Here is an 801-residue protein sequence, read N- to C-terminus: K(+)-insensitive pyrophosphate-energized proton pump (801 aa).

Transmembrane regions (helical) follow at residues 27 to 47, 81 to 101, 109 to 129, 170 to 190, and 201 to 221; these read VIVM…GILV, TLGV…ADDW, VFFL…MWLA, GVVG…VVLV, and GFGL…GIFT. Lys-222 is a substrate binding site. Mg(2+)-binding residues include Asp-225, Asp-229, Asn-252, and Asp-255. Transmembrane regions (helical) follow at residues 261–281, 292–312, 328–348, 372–392, 406–426, 429–449, and 453–473; these read AGMA…ALIL, AFPL…IFAV, GFFV…YVYL, ILAM…QQLT, IGKS…SVGL, AVYT…LGGT, and LALF…GVIV. Residue Asp-483 coordinates Mg(2+). 4 helical membrane-spanning segments follow: residues 515–535, 571–591, 641–661, and 663–683; these read AITK…LFGS, VGLI…INAV, LLAV…ALGA, and LAGA…SGGA. Positions 685, 711, and 715 each coordinate Ca(2+). Lys-718 lines the substrate pocket. A run of 2 helical transmembrane segments spans residues 724–744 and 754–774; these read AINP…PAVV and LGVR…AVYI.

This sequence belongs to the H(+)-translocating pyrophosphatase (TC 3.A.10) family. K(+)-insensitive subfamily. In terms of assembly, homodimer. Mg(2+) is required as a cofactor.

It is found in the cell membrane. It carries out the reaction diphosphate + H2O + H(+)(in) = 2 phosphate + 2 H(+)(out). Functionally, proton pump that utilizes the energy of pyrophosphate hydrolysis as the driving force for proton movement across the membrane. Generates a proton motive force. The protein is K(+)-insensitive pyrophosphate-energized proton pump of Streptomyces avermitilis (strain ATCC 31267 / DSM 46492 / JCM 5070 / NBRC 14893 / NCIMB 12804 / NRRL 8165 / MA-4680).